Consider the following 73-residue polypeptide: Large ribosomal subunit protein uL30 (73 aa).

Belongs to the universal ribosomal protein uL30 family. In terms of assembly, part of the 50S ribosomal subunit.

This chain is Large ribosomal subunit protein uL30, found in Borreliella afzelii (strain PKo) (Borrelia afzelii).